The chain runs to 247 residues: Uridylate kinase (247 aa).

18 to 21 contacts ATP; the sequence is KLSG. Gly60 is a binding site for UMP. Positions 61 and 65 each coordinate ATP. Residues Asp80 and 141–148 contribute to the UMP site; that span reads TGNPFFTT. Residues Thr168, Tyr174, and Asp177 each coordinate ATP.

The protein belongs to the UMP kinase family. As to quaternary structure, homohexamer.

It localises to the cytoplasm. The catalysed reaction is UMP + ATP = UDP + ADP. The protein operates within pyrimidine metabolism; CTP biosynthesis via de novo pathway; UDP from UMP (UMPK route): step 1/1. Its activity is regulated as follows. Inhibited by UTP. Its function is as follows. Catalyzes the reversible phosphorylation of UMP to UDP. This is Uridylate kinase from Pseudomonas savastanoi pv. phaseolicola (strain 1448A / Race 6) (Pseudomonas syringae pv. phaseolicola (strain 1448A / Race 6)).